The primary structure comprises 214 residues: Holliday junction branch migration complex subunit RuvA (214 aa).

The tract at residues 1-64 (MITRIRGEML…EDAMTLYGFT (64 aa)) is domain I. Positions 65–143 (SGEQLAVFEL…DITSKDAYQD (79 aa)) are domain II. The tract at residues 144-160 (ISASEKLDNTGEKLGIS) is flexible linker. Residues 161-214 (TRHKHLDELKAALSSLGYTNREIEKTVDAIQGQITEGQDMEELLRLALQKLNTK) form a domain III region.

This sequence belongs to the RuvA family. Homotetramer. Forms an RuvA(8)-RuvB(12)-Holliday junction (HJ) complex. HJ DNA is sandwiched between 2 RuvA tetramers; dsDNA enters through RuvA and exits via RuvB. An RuvB hexamer assembles on each DNA strand where it exits the tetramer. Each RuvB hexamer is contacted by two RuvA subunits (via domain III) on 2 adjacent RuvB subunits; this complex drives branch migration. In the full resolvosome a probable DNA-RuvA(4)-RuvB(12)-RuvC(2) complex forms which resolves the HJ.

The protein localises to the cytoplasm. The RuvA-RuvB-RuvC complex processes Holliday junction (HJ) DNA during genetic recombination and DNA repair, while the RuvA-RuvB complex plays an important role in the rescue of blocked DNA replication forks via replication fork reversal (RFR). RuvA specifically binds to HJ cruciform DNA, conferring on it an open structure. The RuvB hexamer acts as an ATP-dependent pump, pulling dsDNA into and through the RuvAB complex. HJ branch migration allows RuvC to scan DNA until it finds its consensus sequence, where it cleaves and resolves the cruciform DNA. The polypeptide is Holliday junction branch migration complex subunit RuvA (Natranaerobius thermophilus (strain ATCC BAA-1301 / DSM 18059 / JW/NM-WN-LF)).